The sequence spans 242 residues: DnaJ homolog subfamily B member 6 (242 aa).

The region spanning 2–69 (VDYYEVLGVQ…KKRDIYDRYG (68 aa)) is the J domain. The interaction with HSP70 stretch occupies residues 2 to 146 (VDYYEVLGVQ…TGSFFSTFSG (145 aa)). The tract at residues 119–242 (FEDFFGHRRG…KEQLLRLDNK (124 aa)) is interaction with KRT18. At R135 the chain carries Omega-N-methylarginine.

Homooligomer. Interacts with BAG3, HSPB8 and STUB1. Interacts with ALKBH1. Interacts with HSP70, KRT18 and PTTG. Expressed in all tissues examined with highest expression in brain and retina and lower levels observed in testis, spleen, heart, liver and kidney.

It localises to the cytoplasm. Its subcellular location is the perinuclear region. The protein resides in the nucleus. The protein localises to the myofibril. It is found in the sarcomere. It localises to the z line. Has a stimulatory effect on the ATPase activity of HSP70 in a dose-dependent and time-dependent manner and hence acts as a co-chaperone of HSP70. Plays an indispensable role in the organization of KRT8/KRT18 filaments. Acts as an endogenous molecular chaperone for neuronal proteins including huntingtin. Suppresses aggregation and toxicity of polyglutamine-containing, aggregation-prone proteins. Also reduces cellular toxicity and caspase-3 activity. The sequence is that of DnaJ homolog subfamily B member 6 (DNAJB6) from Bos taurus (Bovine).